We begin with the raw amino-acid sequence, 346 residues long: Phosphate acyltransferase (346 aa).

It belongs to the PlsX family. In terms of assembly, homodimer. Probably interacts with PlsY.

The protein resides in the cytoplasm. It catalyses the reaction a fatty acyl-[ACP] + phosphate = an acyl phosphate + holo-[ACP]. It functions in the pathway lipid metabolism; phospholipid metabolism. Functionally, catalyzes the reversible formation of acyl-phosphate (acyl-PO(4)) from acyl-[acyl-carrier-protein] (acyl-ACP). This enzyme utilizes acyl-ACP as fatty acyl donor, but not acyl-CoA. In Synechococcus elongatus (strain ATCC 33912 / PCC 7942 / FACHB-805) (Anacystis nidulans R2), this protein is Phosphate acyltransferase.